Consider the following 185-residue polypeptide: Transcription antitermination protein NusB (185 aa).

This sequence belongs to the NusB family.

Involved in transcription antitermination. Required for transcription of ribosomal RNA (rRNA) genes. Binds specifically to the boxA antiterminator sequence of the ribosomal RNA (rrn) operons. The sequence is that of Transcription antitermination protein NusB from Rhodospirillum rubrum (strain ATCC 11170 / ATH 1.1.1 / DSM 467 / LMG 4362 / NCIMB 8255 / S1).